A 249-amino-acid polypeptide reads, in one-letter code: MAQYYPGTSKVAQNRRNFCNPEYELEKLREISDEDVVKILGHRAPGEEYPSVHPPLEEMDEPEDAIREMVEPIDGAKAGDRVRYIQFTDSMYFAPAQPYVRSRAYLCRYRGADAGTLSGRQIIETRERDLEKISKELLETEFFDPARSGVRGKSVHGHSLRLDEDGMMFDMLRRQIYNKDTGRVEMVKNQIGDELDEPVDLGEPLDEETLMNKTTIYRVDGEAYRDDTDAVEIMQRIHVLRSQGGYNPE.

Arg-120 lines the coenzyme M pocket.

Belongs to the methyl-coenzyme M reductase gamma subunit family. As to quaternary structure, MCR is a hexamer of two alpha, two beta, and two gamma chains, forming a dimer of heterotrimers. Requires coenzyme F430 as cofactor.

It localises to the cytoplasm. The catalysed reaction is coenzyme B + methyl-coenzyme M = methane + coenzyme M-coenzyme B heterodisulfide. It functions in the pathway one-carbon metabolism; methyl-coenzyme M reduction; methane from methyl-coenzyme M: step 1/1. Its function is as follows. Component of the methyl-coenzyme M reductase (MCR) I that catalyzes the reductive cleavage of methyl-coenzyme M (CoM-S-CH3 or 2-(methylthio)ethanesulfonate) using coenzyme B (CoB or 7-mercaptoheptanoylthreonine phosphate) as reductant which results in the production of methane and the mixed heterodisulfide of CoB and CoM (CoM-S-S-CoB). This is the final step in methanogenesis. The polypeptide is Methyl-coenzyme M reductase I subunit gamma (mcrG) (Methanothermobacter thermautotrophicus (strain ATCC 29096 / DSM 1053 / JCM 10044 / NBRC 100330 / Delta H) (Methanobacterium thermoautotrophicum)).